A 419-amino-acid polypeptide reads, in one-letter code: Divinyl chlorophyllide a 8-vinyl-reductase, chloroplastic (419 aa).

The N-terminal 71 residues, 1–71, are a transit peptide targeting the chloroplast; that stretch reads MSICSTVGAG…PIVVSSTPVV (71 aa).

The protein resides in the plastid. Its subcellular location is the chloroplast. It catalyses the reaction protochlorophyllide a + NADP(+) = 3,8-divinyl protochlorophyllide a + NADPH + H(+). The protein operates within porphyrin-containing compound metabolism; chlorophyll biosynthesis. Catalyzes the conversion of divinyl chlorophyllide to monovinyl chlorophyllide. Reduces the 8-vinyl group of the tetrapyrrole to an ethyl group using NADPH as the reductant. The best substrate is (3,8-divinyl)-chlorophyllide a (DV-Chlidea). Very low activity with (3,8-divinyl)-protochlorophyllide a (DV-Pchlidea) and (3,8-divinyl)-magnesium-protoporphyrin IX monomethyl ester (DV-MPE). No activity with (3,8-divinyl)-magnesium-protoporphyrin IX (DV-Mg-Proto) and (3,8-divinyl)-chlorophyll a (DV-Chla). This Cucumis sativus (Cucumber) protein is Divinyl chlorophyllide a 8-vinyl-reductase, chloroplastic (DVR).